The sequence spans 687 residues: UvrABC system protein C (687 aa).

The GIY-YIG domain maps to 16-95; sequence TEPGVYKFRD…IKKFDPHFNV (80 aa). The UVR domain maps to 208-243; the sequence is DSVVRRLTNEMISASEALDFEKAARKRDDLNAVRKI.

Belongs to the UvrC family. Interacts with UvrB in an incision complex.

The protein resides in the cytoplasm. Its function is as follows. The UvrABC repair system catalyzes the recognition and processing of DNA lesions. UvrC both incises the 5' and 3' sides of the lesion. The N-terminal half is responsible for the 3' incision and the C-terminal half is responsible for the 5' incision. In Corynebacterium diphtheriae (strain ATCC 700971 / NCTC 13129 / Biotype gravis), this protein is UvrABC system protein C.